We begin with the raw amino-acid sequence, 294 residues long: Small ribosomal subunit protein uS2 (294 aa).

The protein belongs to the universal ribosomal protein uS2 family.

This is Small ribosomal subunit protein uS2 (rpsB) from Mycoplasma pneumoniae (strain ATCC 29342 / M129 / Subtype 1) (Mycoplasmoides pneumoniae).